The sequence spans 206 residues: Insecticyanin-B (206 aa).

Positions 1–17 (MQRFLVFTIVAVATAAA) are cleaved as a signal peptide. 2 disulfide bridges follow: cysteine 26–cysteine 136 and cysteine 60–cysteine 192.

The protein belongs to the calycin superfamily. Lipocalin family. As to quaternary structure, homotetramer. In terms of tissue distribution, synthesized only in the caterpillars, apparently by the epidermis and secreted into the hemolymph. The protein is passed over from the larval hemolymph to that of pupae and adults and is sequestered in the eggs.

The protein resides in the secreted. Its function is as follows. This protein binds a chromophore: biliverdin IX, isomer gamma. Mixed with lipoprotein-bound carotenes, this blue protein provides hornworms with their green cryptic coloration which serves a camouflage. This Manduca sexta (Tobacco hawkmoth) protein is Insecticyanin-B (INSB).